Here is a 217-residue protein sequence, read N- to C-terminus: Uracil-DNA glycosylase (217 aa).

Catalysis depends on D62, which acts as the Proton acceptor.

This sequence belongs to the uracil-DNA glycosylase (UDG) superfamily. UNG family.

It localises to the cytoplasm. It catalyses the reaction Hydrolyzes single-stranded DNA or mismatched double-stranded DNA and polynucleotides, releasing free uracil.. In terms of biological role, excises uracil residues from the DNA which can arise as a result of misincorporation of dUMP residues by DNA polymerase or due to deamination of cytosine. This Streptococcus pyogenes serotype M18 (strain MGAS8232) protein is Uracil-DNA glycosylase.